Here is a 372-residue protein sequence, read N- to C-terminus: MFKHLRRWFVTHIFGRSRQRARLVSKDGRCNIEFGNVDAQSRFIFFVDIWTTVLDLKWRYKMTVFITAFLGSWFLFGLLWYVVAYVHKDLPEFYPPDNRTPCVENINGMTSAFLFSLETQVTIGYGFRFVTEQCATAIFLLIFQSILGVIINSFMCGAILAKISRPKKRAKTITFSKNAVISKRGGKLCLLIRVANLRKSLLIGSHIYGKLLKTTITPEGETIILDQTNINFVVDAGNENLFFISPLTIYHIIDHNSPFFHMAAETLSQQDFELVVFLDGTVESTSATCQVRTSYIPEEVLWGYRFVPIVSKTKEGKYRVDFHNFGKTVEVETPHCAMCLYNEKDARARMKRGYDNPNFVLSEVDETDDTQM.

The Cytoplasmic portion of the chain corresponds to 1 to 58 (MFKHLRRWFVTHIFGRSRQRARLVSKDGRCNIEFGNVDAQSRFIFFVDIWTTVLDLKW). The residue at position 25 (Ser25) is a Phosphoserine; by SGK1. The chain crosses the membrane as a helical span at residues 59–83 (RYKMTVFITAFLGSWFLFGLLWYVV). The Extracellular segment spans residues 84–108 (AYVHKDLPEFYPPDNRTPCVENING). Asn98 is a glycosylation site (N-linked (GlcNAc...) asparagine). Positions 109 to 120 (MTSAFLFSLETQ) form an intramembrane region, helical; Pore-forming. Positions 121–127 (VTIGYGF) form an intramembrane region, pore-forming. The short motif at 122-127 (TIGYGF) is the Selectivity filter element. At 128 to 136 (RFVTEQCAT) the chain is on the extracellular side. The helical transmembrane segment at 137-158 (AIFLLIFQSILGVIINSFMCGA) threads the bilayer. The Cytoplasmic portion of the chain corresponds to 159-372 (ILAKISRPKK…EVDETDDTQM (214 aa)). The segment at 161–188 (AKISRPKKRAKTITFSKNAVISKRGGKL) is polyphosphoinositide (PIP2)-binding. Residue 204–211 (GSHIYGKL) coordinates ATP.

This sequence belongs to the inward rectifier-type potassium channel (TC 1.A.2.1) family. KCNJ1 subfamily. Interacts with SGK1 and SLC9A3R2/NHERF2. In terms of processing, phosphorylation at Ser-25 by SGK1 is necessary for its expression at the cell membrane.

It is found in the cell membrane. It carries out the reaction K(+)(in) = K(+)(out). With respect to regulation, inhibited by WNK3. Activated by phosphatidylinositol 4,5 biphosphate (PtdIns(4,5)P2). Inward rectifier potassium channels are characterized by a greater tendency to allow potassium to flow into the cell rather than out of it. Their voltage dependence is regulated by the concentration of extracellular potassium; as external potassium is raised, the voltage range of the channel opening shifts to more positive voltages. The inward rectification is mainly due to the blockage of outward current by internal magnesium. This channel is activated by internal ATP and can be blocked by external barium. In the kidney, probably plays a major role in potassium homeostasis. This is ATP-sensitive inward rectifier potassium channel 1 (Kcnj1) from Mus musculus (Mouse).